The chain runs to 424 residues: Light-independent protochlorophyllide reductase subunit N (424 aa).

[4Fe-4S] cluster-binding residues include cysteine 16, cysteine 41, and cysteine 102.

This sequence belongs to the BchN/ChlN family. Protochlorophyllide reductase is composed of three subunits; ChlL, ChlN and ChlB. Forms a heterotetramer of two ChlB and two ChlN subunits. It depends on [4Fe-4S] cluster as a cofactor.

It catalyses the reaction chlorophyllide a + oxidized 2[4Fe-4S]-[ferredoxin] + 2 ADP + 2 phosphate = protochlorophyllide a + reduced 2[4Fe-4S]-[ferredoxin] + 2 ATP + 2 H2O. It participates in porphyrin-containing compound metabolism; chlorophyll biosynthesis (light-independent). Its function is as follows. Component of the dark-operative protochlorophyllide reductase (DPOR) that uses Mg-ATP and reduced ferredoxin to reduce ring D of protochlorophyllide (Pchlide) to form chlorophyllide a (Chlide). This reaction is light-independent. The NB-protein (ChlN-ChlB) is the catalytic component of the complex. This Synechococcus sp. (strain WH7803) protein is Light-independent protochlorophyllide reductase subunit N.